A 110-amino-acid chain; its full sequence is UPF0060 membrane protein Francci3_2786 (110 aa).

4 consecutive transmembrane segments (helical) span residues 8 to 28 (LLFVVAAVTEIGGAWLVWQGV), 33 to 53 (GPVWVGLGIGFLAAYGFVATL), 62 to 82 (ILAAYGGVFVAGSLLWGVAVD), and 87 to 107 (DRYDLAGAAICLLGVAVIMYA).

This sequence belongs to the UPF0060 family.

The protein localises to the cell membrane. This Frankia casuarinae (strain DSM 45818 / CECT 9043 / HFP020203 / CcI3) protein is UPF0060 membrane protein Francci3_2786.